The following is a 98-amino-acid chain: Small ribosomal subunit protein bS6 (98 aa).

This sequence belongs to the bacterial ribosomal protein bS6 family.

In terms of biological role, binds together with bS18 to 16S ribosomal RNA. The protein is Small ribosomal subunit protein bS6 of Limosilactobacillus reuteri (strain DSM 20016) (Lactobacillus reuteri).